The sequence spans 273 residues: Nucleotide-binding protein TT_C1664 (273 aa).

Position 8–15 (8–15) interacts with ATP; that stretch reads GLSGAGKT. GTP is bound at residue 57–60; the sequence is DARA.

It belongs to the RapZ-like family.

Its function is as follows. Displays ATPase and GTPase activities. In Thermus thermophilus (strain ATCC BAA-163 / DSM 7039 / HB27), this protein is Nucleotide-binding protein TT_C1664.